We begin with the raw amino-acid sequence, 251 residues long: Small ribosomal subunit protein uS3 (251 aa).

The KH type-2 domain occupies 39–109; the sequence is IRNYVLARLK…EVKIDVVEVI (71 aa). Basic and acidic residues predominate over residues 221-239; sequence EMKRMKDRRADSKSRPRDP. The disordered stretch occupies residues 221 to 251; it reads EMKRMKDRRADSKSRPRDPRSKRRRSRTKRA. Over residues 240-251 the composition is skewed to basic residues; it reads RSKRRRSRTKRA.

Belongs to the universal ribosomal protein uS3 family. Part of the 30S ribosomal subunit. Forms a tight complex with proteins S10 and S14.

Its function is as follows. Binds the lower part of the 30S subunit head. Binds mRNA in the 70S ribosome, positioning it for translation. This chain is Small ribosomal subunit protein uS3, found in Chlorobium limicola (strain DSM 245 / NBRC 103803 / 6330).